The sequence spans 479 residues: Proline--tRNA ligase 2 (479 aa).

The protein belongs to the class-II aminoacyl-tRNA synthetase family. ProS type 3 subfamily. In terms of assembly, homodimer.

It is found in the cytoplasm. The catalysed reaction is tRNA(Pro) + L-proline + ATP = L-prolyl-tRNA(Pro) + AMP + diphosphate. Functionally, catalyzes the attachment of proline to tRNA(Pro) in a two-step reaction: proline is first activated by ATP to form Pro-AMP and then transferred to the acceptor end of tRNA(Pro). This is Proline--tRNA ligase 2 from Rhodococcus jostii (strain RHA1).